A 145-amino-acid chain; its full sequence is D-aminoacyl-tRNA deacylase (145 aa).

The Gly-cisPro motif, important for rejection of L-amino acids signature appears at 137 to 138 (GP).

Belongs to the DTD family. In terms of assembly, homodimer.

It localises to the cytoplasm. The enzyme catalyses glycyl-tRNA(Ala) + H2O = tRNA(Ala) + glycine + H(+). The catalysed reaction is a D-aminoacyl-tRNA + H2O = a tRNA + a D-alpha-amino acid + H(+). Its function is as follows. An aminoacyl-tRNA editing enzyme that deacylates mischarged D-aminoacyl-tRNAs. Also deacylates mischarged glycyl-tRNA(Ala), protecting cells against glycine mischarging by AlaRS. Acts via tRNA-based rather than protein-based catalysis; rejects L-amino acids rather than detecting D-amino acids in the active site. By recycling D-aminoacyl-tRNA to D-amino acids and free tRNA molecules, this enzyme counteracts the toxicity associated with the formation of D-aminoacyl-tRNA entities in vivo and helps enforce protein L-homochirality. This chain is D-aminoacyl-tRNA deacylase, found in Rhodopirellula baltica (strain DSM 10527 / NCIMB 13988 / SH1).